A 129-amino-acid polypeptide reads, in one-letter code: MRHGNGLRKLNRTSSHRLAMLRNMSNSLLEHEVIKTTLPKAKELRMVVEPLITLGKKDNLANRRLAFNRTRDRDIVTKLFTELGPRYATRPGGYLRILKFGFRHGDNAPMALVELVDRPEVEETAVVAE.

Belongs to the bacterial ribosomal protein bL17 family. As to quaternary structure, part of the 50S ribosomal subunit. Contacts protein L32.

The polypeptide is Large ribosomal subunit protein bL17 (Polynucleobacter asymbioticus (strain DSM 18221 / CIP 109841 / QLW-P1DMWA-1) (Polynucleobacter necessarius subsp. asymbioticus)).